Reading from the N-terminus, the 136-residue chain is Large ribosomal subunit protein uL16 (136 aa).

Belongs to the universal ribosomal protein uL16 family. Part of the 50S ribosomal subunit.

Its function is as follows. Binds 23S rRNA and is also seen to make contacts with the A and possibly P site tRNAs. The chain is Large ribosomal subunit protein uL16 from Karelsulcia muelleri (strain GWSS) (Sulcia muelleri).